The following is a 271-amino-acid chain: Phosphatidylinositol transfer protein beta isoform (271 aa).

Position 215 is an N6-acetyllysine (lysine 215). Phosphoserine is present on serine 262.

It belongs to the PtdIns transfer protein family. PI transfer class I subfamily. Post-translationally, constitutive phosphorylation of Ser-262 has no effect on phospholipid transfer activity but is required for Golgi targeting.

It is found in the golgi apparatus. The protein resides in the golgi apparatus membrane. Its subcellular location is the endoplasmic reticulum membrane. It catalyses the reaction a 1,2-diacyl-sn-glycero-3-phosphocholine(in) = a 1,2-diacyl-sn-glycero-3-phosphocholine(out). The enzyme catalyses a 1,2-diacyl-sn-glycero-3-phospho-(1D-myo-inositol)(in) = a 1,2-diacyl-sn-glycero-3-phospho-(1D-myo-inositol)(out). It carries out the reaction an N-(acyl)-sphingosylphosphocholine(in) = an N-(acyl)-sphingosylphosphocholine(out). Functionally, catalyzes the transfer of phosphatidylinositol, phosphatidylcholine and sphingomyelin between membranes. Required for COPI-mediated retrograde transport from the Golgi to the endoplasmic reticulum; phosphatidylinositol and phosphatidylcholine transfer activity is essential for this function. This Bos taurus (Bovine) protein is Phosphatidylinositol transfer protein beta isoform (PITPNB).